Reading from the N-terminus, the 553-residue chain is Efflux pump mlcE (553 aa).

Residues M1–S19 show a composition bias toward basic and acidic residues. A disordered region spans residues M1–S29. Residue N21 is glycosylated (N-linked (GlcNAc...) asparagine). A run of 13 helical transmembrane segments spans residues L41–V61, V77–G96, L101–L121, A136–A156, V164–G184, C196–I216, L245–G265, S273–W293, L319–F339, V352–I372, G376–V396, A440–F460, and T516–W536. A glycan (N-linked (GlcNAc...) asparagine) is linked at N543.

It belongs to the major facilitator superfamily. TCR/Tet family.

The protein resides in the membrane. Functionally, efflux pump; part of the gene cluster that mediates the biosynthesis of compactin, also known as mevastatin or ML-236B, and which acts as a potent competitive inhibitor of HMG-CoA reductase. In Penicillium citrinum, this protein is Efflux pump mlcE.